Reading from the N-terminus, the 354-residue chain is MAKQAIKRAKILAVKNNNKIGVLLINLGTPDEPSVPAVRRYLRQFLSDPKVIDVPSLVRWIIVHLCILPFRPKRSAKLYQKIWMPEGSPLLVYSEMLRERVGETLGDDFCVALGMRYGKPSIETALKKLQEAQCRQLIVLPLFPQYSTSTTASALEGVRAKNSFKEMTVIDRFFEEPHYIDSMTTLIHENLNEFQPDYFLFSYHGLPERHLVKSGCQLAICNRKNNCSPISSSNENCYRAQCFETSRLIAKKLNLTDQQYGVAFQSRLGRAKWIEPYTDKYLIELSKKGIKKLMVVCPSFPVDCLETLEEIGIRAQSQWQRLGGETLKLIPSLNAHPQWVNAIAKMAKKSLQLF.

Fe cation contacts are provided by histidine 204 and glutamate 306.

The protein belongs to the ferrochelatase family.

Its subcellular location is the cytoplasm. The catalysed reaction is heme b + 2 H(+) = protoporphyrin IX + Fe(2+). It participates in porphyrin-containing compound metabolism; protoheme biosynthesis; protoheme from protoporphyrin-IX: step 1/1. Catalyzes the ferrous insertion into protoporphyrin IX. The protein is Ferrochelatase of Coxiella burnetii (strain CbuG_Q212) (Coxiella burnetii (strain Q212)).